We begin with the raw amino-acid sequence, 532 residues long: MSDLLILTMNYLSHGLVIHMIINGIVLALIIPSMTNKITQMVVDNDHVRLIEPFVLLVLMELISGIQKIFFIQKYQLDLQRKIHTGIEDYICKKISALPWNLTRTVLSNADLGKSKNIIVYSTLSLIDILTYQSSHLFAFIGYTLWILYNSPITLTIYILLIPIIVFQIKYKNITNPSVYNKIWETYRNLASNQFMDIIHSRGPEIHDKMIKTINEYEETRSTNTLNDNKYVESINLAITLLTRFNLLIVLLIDPNISSFMIQLQFGTIIKNTSNLFCSAYRKYQDLRKEQLNIDNVLPTIESPIIKQINDFESICINKLVYEYSKTEFKLELKSPIELFRSQIVLLEGKSGSGKSSFMDIIAGVIPCNQYQFDIKIDDTVTNGGFQTLNKKRIYIEQFATSNWNIMAKDFITGHYRFSKIIMEHSLTMANCKDFVTIEEVSSTNCSKLSGGQKGRIEIARMIYAIIMDRPSILILDEIDKSLQTDLAVSIIESVIKICRSNRILCIMSAHNNEVKKLNFDMIIPMNNGIIG.

A run of 5 helical transmembrane segments spans residues 11-31 (YLSH…ALII), 51-71 (IEPF…KIFF), 126-146 (LIDI…YTLW), 147-167 (ILYN…IIVF), and 231-253 (YVES…VLLI). The ABC transporter domain maps to 315–531 (ICINKLVYEY…MIIPMNNGII (217 aa)). Residue 349 to 356 (GKSGSGKS) participates in ATP binding.

The protein resides in the membrane. This is an uncharacterized protein from Acanthamoeba polyphaga mimivirus (APMV).